We begin with the raw amino-acid sequence, 403 residues long: Palmitoyltransferase ZDHHC23-A (403 aa).

At 1–70 the chain is on the cytoplasmic side; the sequence is MKRERFKPPE…ADRLGVSCCT (70 aa). Residues 71–91 form a helical membrane-spanning segment; the sequence is VGPLRLELSVLPPMVLIPGLL. Arg92 is a topological domain (lumenal). Residues 93–113 form a helical membrane-spanning segment; it reads VAAINCLLGVIILTALPLLVL. The Cytoplasmic segment spans residues 114 to 125; it reads WYYYMTHRRKRR. Residues 126-146 traverse the membrane as a helical segment; that stretch reads TLFFLSLALFSLAYMYYLFLT. At 147–153 the chain is on the lumenal side; that stretch reads EIVPRGD. Residues 154–174 form a helical membrane-spanning segment; it reads VTHLQVVTATTGMMLTLISLV. At 175-268 the chain is on the cytoplasmic side; it reads RTKQGPGFVK…NSCVGQANHR (94 aa). Residues 225–275 enclose the DHHC domain; that stretch reads KKCPVCQLVRPPRAGHCRICGACVLRMDHHCVWINSCVGQANHRQFILTLL. Residue Cys255 is the S-palmitoyl cysteine intermediate of the active site. A helical transmembrane segment spans residues 269 to 289; the sequence is QFILTLLLFLLTSFYGISLVL. Residues 290-319 lie on the Lumenal side of the membrane; the sequence is RSICPKQSLFTAMLYCPGVYNQYSTALCFT. Residues 320-340 traverse the membrane as a helical segment; sequence CVWYSVIITGGLLHLFILQII. Over 341 to 403 the chain is Cytoplasmic; that stretch reads NVSCNVTERE…GSSLNLTDMV (63 aa).

Belongs to the DHHC palmitoyltransferase family.

The protein localises to the golgi apparatus membrane. It is found in the golgi apparatus. It localises to the trans-Golgi network membrane. It catalyses the reaction L-cysteinyl-[protein] + hexadecanoyl-CoA = S-hexadecanoyl-L-cysteinyl-[protein] + CoA. Functionally, palmitoyltransferase that could catalyze the addition of palmitate onto various protein substrates and be involved in a variety of cellular processes. The sequence is that of Palmitoyltransferase ZDHHC23-A (zdhhc23a) from Danio rerio (Zebrafish).